Reading from the N-terminus, the 395-residue chain is ATP phosphoribosyltransferase regulatory subunit (395 aa).

It belongs to the class-II aminoacyl-tRNA synthetase family. HisZ subfamily. In terms of assembly, heteromultimer composed of HisG and HisZ subunits.

Its subcellular location is the cytoplasm. It functions in the pathway amino-acid biosynthesis; L-histidine biosynthesis; L-histidine from 5-phospho-alpha-D-ribose 1-diphosphate: step 1/9. In terms of biological role, required for the first step of histidine biosynthesis. May allow the feedback regulation of ATP phosphoribosyltransferase activity by histidine. This is ATP phosphoribosyltransferase regulatory subunit from Ectopseudomonas mendocina (strain ymp) (Pseudomonas mendocina).